The sequence spans 144 residues: MAVYLLAVAILFCIQGWPSGTVQGQAMSFMEVYERSVCQTREMLVSILDEYPSEVAHLFRPSCVTVLRCGGCCTDESLTCTATGKRSVGREIMRVDPRKGTSKIEVMQFTEHTECECRPRSTVNNGKRKKNPKEGEPRAKFPLV.

The N-terminal stretch at 1 to 24 (MAVYLLAVAILFCIQGWPSGTVQG) is a signal peptide. Position 25 is a pyrrolidone carboxylic acid (glutamine 25). Cystine bridges form between cysteine 38/cysteine 80, cysteine 69/cysteine 115, and cysteine 73/cysteine 117. Residues 119–144 (PRSTVNNGKRKKNPKEGEPRAKFPLV) are disordered. Residues 132–144 (PKEGEPRAKFPLV) show a composition bias toward basic and acidic residues.

This sequence belongs to the PDGF/VEGF growth factor family. Snake venom VEGF subfamily. In terms of assembly, homodimer; disulfide-linked. Interacts with VEGF receptor-1 (FLT1) with a high affinity, whereas it binds to VEGF receptor-2 (KDR) with a low affinity. Does not bind VEGF receptor-3 (FLT4). As to expression, expressed by the venom gland.

The protein resides in the secreted. In terms of biological role, snake venom VEGFs that may contribute to venom dispersion and prey subjugation by inducing vascular permeability and hypotension. This protein induces an increase in capillary permeability after intradermal injection, as well as a drastic hypotensive effect after intravenous injection. The hypotension is mediated by nitric oxide (NO), which is produced by VEGF-activated endothelium NO synthase. Also induces angiogenesis in vitro. Like other crotalid VEGFs, this protein interacts with VEGF receptor-1 (FLT1) with a high affinity, whereas it binds to VEGF receptor-2 (KDR) with a low affinity. This is Snake venom vascular endothelial growth factor toxin cratrin from Crotalus atrox (Western diamondback rattlesnake).